A 526-amino-acid polypeptide reads, in one-letter code: Non-reducing end alpha-L-arabinofuranosidase BoGH43A (526 aa).

Residues 1 to 20 form the signal peptide; sequence MRNALFLIFISLCSVCKSSA. Asp34 (proton acceptor) is an active-site residue. The Proton donor role is filled by Glu189.

Belongs to the glycosyl hydrolase 43 family.

The protein localises to the periplasm. It carries out the reaction Hydrolysis of terminal non-reducing alpha-L-arabinofuranoside residues in alpha-L-arabinosides.. Its pathway is glucan metabolism; xyloglucan degradation. Its function is as follows. Alpha-L-arabinofuranosidase involved in xyloglucan degradation by mediating the cleavage of terminal non-reducing alpha-L-arabinofuranoside residues in xyloglucan branches, converting the 'S' units to 'X' units. This Bacteroides ovatus (strain ATCC 8483 / DSM 1896 / JCM 5824 / BCRC 10623 / CCUG 4943 / NCTC 11153) protein is Non-reducing end alpha-L-arabinofuranosidase BoGH43A.